The chain runs to 308 residues: GTP cyclohydrolase FolE2 (308 aa).

This sequence belongs to the GTP cyclohydrolase IV family.

It carries out the reaction GTP + H2O = 7,8-dihydroneopterin 3'-triphosphate + formate + H(+). It participates in cofactor biosynthesis; 7,8-dihydroneopterin triphosphate biosynthesis; 7,8-dihydroneopterin triphosphate from GTP: step 1/1. In terms of biological role, converts GTP to 7,8-dihydroneopterin triphosphate. The polypeptide is GTP cyclohydrolase FolE2 (Idiomarina loihiensis (strain ATCC BAA-735 / DSM 15497 / L2-TR)).